The chain runs to 317 residues: Thiamine thiazole synthase (317 aa).

Substrate contacts are provided by residues Cys-78, 99–100 (EA), Gly-107, and Val-172. 2,3-didehydroalanine (Cys) is present on Cys-206. Substrate-binding positions include Asp-208, His-223, Met-275, and 285–287 (RMG).

The protein belongs to the THI4 family. In terms of assembly, homooctamer. Fe cation serves as cofactor. During the catalytic reaction, a sulfide is transferred from Cys-206 to a reaction intermediate, generating a dehydroalanine residue.

The protein resides in the cytoplasm. The protein localises to the nucleus. The catalysed reaction is [ADP-thiazole synthase]-L-cysteine + glycine + NAD(+) = [ADP-thiazole synthase]-dehydroalanine + ADP-5-ethyl-4-methylthiazole-2-carboxylate + nicotinamide + 3 H2O + 2 H(+). Its function is as follows. Involved in biosynthesis of the thiamine precursor thiazole. Catalyzes the conversion of NAD and glycine to adenosine diphosphate 5-(2-hydroxyethyl)-4-methylthiazole-2-carboxylic acid (ADT), an adenylated thiazole intermediate. The reaction includes an iron-dependent sulfide transfer from a conserved cysteine residue of the protein to a thiazole intermediate. The enzyme can only undergo a single turnover, which suggests it is a suicide enzyme. May have additional roles in adaptation to various stress conditions and in DNA damage tolerance. The polypeptide is Thiamine thiazole synthase (Yarrowia lipolytica (strain CLIB 122 / E 150) (Yeast)).